Consider the following 464-residue polypeptide: Probable 1,4-beta-D-glucan cellobiohydrolase C (464 aa).

The signal sequence occupies residues 1-19; the sequence is MKNFAPSLALSLLLPTVQA. The CBM1 domain maps to 20–55; sequence QQTMWGQCGGAGWSGATDCVAGGVCSTQNAYYAQCL. 2 disulfide bridges follow: Cys27-Cys44 and Cys38-Cys54. The interval 59–102 is thr-rich linker; it reads TTATTLSTTSKGTTTTTTSSTTSTGGGSSSTTTKTSTSAGPTVT. Positions 65-100 are enriched in low complexity; that stretch reads STTSKGTTTTTTSSTTSTGGGSSSTTTKTSTSAGPT. Residues 65-108 form a disordered region; sequence STTSKGTTTTTTSSTTSTGGGSSSTTTKTSTSAGPTVTGSPSGN. Positions 103–464 are catalytic; sequence GSPSGNPFSG…QLLTNANPAF (362 aa). Asp194 is a catalytic residue. Disulfide bonds link Cys195-Cys254 and Cys386-Cys433. The active-site Proton donor is Asp240. The Nucleophile role is filled by Asp419.

This sequence belongs to the glycosyl hydrolase 6 (cellulase B) family.

The protein resides in the secreted. The enzyme catalyses Hydrolysis of (1-&gt;4)-beta-D-glucosidic linkages in cellulose and cellotetraose, releasing cellobiose from the non-reducing ends of the chains.. Its function is as follows. The biological conversion of cellulose to glucose generally requires three types of hydrolytic enzymes: (1) Endoglucanases which cut internal beta-1,4-glucosidic bonds; (2) Exocellobiohydrolases that cut the disaccharide cellobiose from the non-reducing end of the cellulose polymer chain; (3) Beta-1,4-glucosidases which hydrolyze the cellobiose and other short cello-oligosaccharides to glucose. In Aspergillus clavatus (strain ATCC 1007 / CBS 513.65 / DSM 816 / NCTC 3887 / NRRL 1 / QM 1276 / 107), this protein is Probable 1,4-beta-D-glucan cellobiohydrolase C (cbhC).